A 263-amino-acid polypeptide reads, in one-letter code: Chymotrypsinogen B (263 aa).

A signal peptide spans 1–18 (MASLWLLSCFSLVGAAFG). 5 disulfides stabilise this stretch: cysteine 19/cysteine 140, cysteine 60/cysteine 76, cysteine 154/cysteine 219, cysteine 186/cysteine 200, and cysteine 209/cysteine 238. A Peptidase S1 domain is found at 34 to 261 (IVNGEDAVPG…LIPWVQKILA (228 aa)). Histidine 75 functions as the Charge relay system in the catalytic mechanism. The residue at position 93 (serine 93) is a Phosphoserine. Residue aspartate 120 is the Charge relay system of the active site. The active-site Charge relay system is the serine 213.

It belongs to the peptidase S1 family.

The protein localises to the secreted. Its subcellular location is the extracellular space. It carries out the reaction Preferential cleavage: Tyr-|-Xaa, Trp-|-Xaa, Phe-|-Xaa, Leu-|-Xaa.. The sequence is that of Chymotrypsinogen B from Homo sapiens (Human).